Reading from the N-terminus, the 93-residue chain is YcgL domain-containing protein AHA_2135 (93 aa).

Positions 1–85 constitute a YcgL domain; that stretch reads MLCAVYKSRK…PPENLLEQHK (85 aa).

This Aeromonas hydrophila subsp. hydrophila (strain ATCC 7966 / DSM 30187 / BCRC 13018 / CCUG 14551 / JCM 1027 / KCTC 2358 / NCIMB 9240 / NCTC 8049) protein is YcgL domain-containing protein AHA_2135.